A 345-amino-acid polypeptide reads, in one-letter code: N-malonyltransferase FDB2 (345 aa).

Cys110 functions as the Acyl-thioester intermediate in the catalytic mechanism. His158 (proton acceptor) is an active-site residue. Residue Asp173 is part of the active site.

Belongs to the arylamine N-acetyltransferase family.

It functions in the pathway xenobiotic degradation. N-malonyltransferase; part of the Fusarium detoxification of benzoxazolinone cluster 2 (FDB2) involved in the degradation of benzoxazolinones produced by the host plant. Maize, wheat, and rye produce the 2 benzoxazinone phytoanticipins 2,4-dihy-droxy-7-methoxy-1,4-benzoxazin-3-one (DIMBOA) and 2,4-dihydroxy-1,4-benzoxazin-3-one (DIBOA) that, due to their inherent instability once released, spontaneously degrade to the more stable corresponding benzoxazolinones, 6-methoxy-2-benzoxazolinone (MBOA) and 2-benzoxazolinone (BOA), respectively. The first step in the detoxification of benzoxazolinones involves the hydrolysis of the cyclic ester bond of benzoxazolinones by the FDB1 cluster gamma-lactamase MBL1 to aminophenols. MBL1 is able to convert BOA into 2-aminophenol (2-AP), as well as MBOA into 5-methoxy-2-aminophenol (2-AMP). The FDB2 cluster N-malonyltransferase FDB2/NAT1 then metabolizes aminophenols via N-malonylation to non-toxic malonamic acids. FDB2/NAT1 converts 2-AP into N-(2-hydroxyphenyl) malonamic acid (HPMA) and 2-AMP into N-(2-hydroxy-4-methoxyphenyl) malonamic acid (HMPMA). The duplicated dienlactone hydrolases DLH1 and DLH2 may provide redundant function for hydrolyzing the lactone moiety in the BOA molecule. The roles of the amidases an other enzymes encoded by the 2 FDB clusters have not been identified so far. This is N-malonyltransferase FDB2 from Gibberella moniliformis (strain M3125 / FGSC 7600) (Maize ear and stalk rot fungus).